Reading from the N-terminus, the 290-residue chain is Protease HtpX (290 aa).

2 helical membrane-spanning segments follow: residues 4 to 24 (IMLF…TLKL) and 36 to 56 (GSLL…SLFI). Residue His142 participates in Zn(2+) binding. The active site involves Glu143. Residue His146 participates in Zn(2+) binding. 2 helical membrane passes run 150–170 (GDMV…MFFA) and 193–213 (FIAT…IVMW). A Zn(2+)-binding site is contributed by Glu219.

The protein belongs to the peptidase M48B family. Zn(2+) is required as a cofactor.

It localises to the cell inner membrane. This chain is Protease HtpX, found in Ectopseudomonas mendocina (strain ymp) (Pseudomonas mendocina).